A 388-amino-acid chain; its full sequence is MSSIPNINWNDPNNGKSNTSRQSQPQPQLPSNVSPPNSRAVPTSGSIGGPQYGSSQFSNEYSRNPNTIGGPPFPLQSNQRGYMPNTGYPVQQTAQQRSGDKLQQVHSQQQQQQQQQQQPLYQQYPPQSVGYLAGDVYNPQHQEYVQMNQLPNQHYNLQQRQQAQGQQLKSQLNEQNAMMSASTQQYPVQDFTNPYPNAQNPAEQQQQQQPLRTQSQQWDGYQSQPLYSAAGNTIPSSIQQQIPPQNLSPSEQQQVKQQQPSPPEQGTKKKPGRKPKLRKLSESSSETPQVPKTASSSSSSPTAVNSGKPITKRSRMGCLTCRQRKKRCCETRPRCTECTRLRLNCTWPKPGTEHKNKPKDQKDDENTIEHAEFGRIKVLRGIVEYRSK.

Over residues 1 to 19 (MSSIPNINWNDPNNGKSNT) the composition is skewed to polar residues. 3 disordered regions span residues 1-120 (MSSI…QQPL), 157-219 (LQQR…QQWD), and 236-311 (SSIQ…KPIT). Residues 20–38 (SRQSQPQPQLPSNVSPPNS) are compositionally biased toward low complexity. Composition is skewed to polar residues over residues 52-67 (YGSS…NPNT) and 88-97 (YPVQQTAQQR). Composition is skewed to low complexity over residues 102–120 (LQQV…QQPL) and 157–172 (LQQR…KSQL). Residues 173-203 (NEQNAMMSASTQQYPVQDFTNPYPNAQNPAE) show a composition bias toward polar residues. Composition is skewed to low complexity over residues 204 to 217 (QQQQ…QSQQ) and 236 to 259 (SSIQ…KQQQ). A compositionally biased stretch (basic residues) spans 268–278 (KKKPGRKPKLR). The segment covering 282 to 294 (ESSSETPQVPKTA) has biased composition (polar residues). Positions 318-345 (CLTCRQRKKRCCETRPRCTECTRLRLNC) form a DNA-binding region, zn(2)-C6 fungal-type. Residues 348-367 (PKPGTEHKNKPKDQKDDENT) are disordered. The segment covering 351–367 (GTEHKNKPKDQKDDENT) has biased composition (basic and acidic residues).

The protein resides in the nucleus. Perhaps a regulatory role. May be involved in transcriptional activation. The protein is Zinc finger protein 1 (CZF1) of Candida albicans (strain WO-1) (Yeast).